Reading from the N-terminus, the 331-residue chain is UBX domain-containing protein 2B (331 aa).

Disordered stretches follow at residues 1 to 26 and 40 to 65; these read MAEGGGPEPGEQERRSSGPRPPSARD and KCKSSKSNRPKATVFKSPRTPPQRFY. An N-acetylalanine modification is found at Ala2. Ser56 carries the phosphoserine modification. Thr59 carries the post-translational modification Phosphothreonine. Residue Ser66 is modified to Phosphoserine. Residues 141 to 206 enclose the SEP domain; it reads DVQILLKLWS…MEDHQDQEYI (66 aa). Phosphoserine occurs at positions 231, 234, and 235. A UBX domain is found at 252-329; the sequence is DSVPTTKIQI…DILNTVLLQQ (78 aa).

The protein belongs to the NSFL1C family. As to quaternary structure, interacts with VCP. Does not bind ubiquitin.

It localises to the nucleus. The protein localises to the cytoplasm. It is found in the cytosol. Its subcellular location is the endoplasmic reticulum. The protein resides in the golgi apparatus. It localises to the cytoskeleton. The protein localises to the microtubule organizing center. It is found in the centrosome. Adapter protein required for Golgi and endoplasmic reticulum biogenesis. Involved in Golgi and endoplasmic reticulum maintenance during interphase and in their reassembly at the end of mitosis. The complex formed with VCP has membrane fusion activity; membrane fusion activity requires USO1-GOLGA2 tethering and BET1L. VCPIP1 is also required, but not its deubiquitinating activity. Together with NSFL1C/p47, regulates the centrosomal levels of kinase AURKA/Aurora A during mitotic progression by promoting AURKA removal from centrosomes in prophase. Also, regulates spindle orientation during mitosis. In Homo sapiens (Human), this protein is UBX domain-containing protein 2B (UBXN2B).